Consider the following 182-residue polypeptide: Peptidyl-prolyl cis-trans isomerase ssp-1 (182 aa).

In terms of domain architecture, WW spans T7–G41. The PpiC domain maps to Q71–E182.

It catalyses the reaction [protein]-peptidylproline (omega=180) = [protein]-peptidylproline (omega=0). In terms of biological role, site-specific PPIase with respect to the amino acid N-terminal to the proline residue. Peptides with glutamate, phosphoserine, or phosphothreonine in the -1 position are the best substrates. It is not only able to isomerize small peptides but is also active in protein folding. The chain is Peptidyl-prolyl cis-trans isomerase ssp-1 (ssp-1) from Neurospora crassa (strain ATCC 24698 / 74-OR23-1A / CBS 708.71 / DSM 1257 / FGSC 987).